Here is a 405-residue protein sequence, read N- to C-terminus: Squamosa promoter-binding-like protein 6 (405 aa).

The SBP-type zinc-finger motif lies at 121–198 (NPLCQVYGCS…AGHNERRRKP (78 aa)). Zn(2+) contacts are provided by Cys124, Cys129, Cys146, His149, Cys165, Cys168, His172, and Cys184. The Bipartite nuclear localization signal signature appears at 181–197 (KRSCRRRLAGHNERRRK).

Requires Zn(2+) as cofactor.

Its subcellular location is the nucleus. Trans-acting factor that binds specifically to the consensus nucleotide sequence 5'-TNCGTACAA-3'. In Arabidopsis thaliana (Mouse-ear cress), this protein is Squamosa promoter-binding-like protein 6 (SPL6).